The following is a 281-amino-acid chain: tRNA pseudouridine synthase A (281 aa).

D55 serves as the catalytic Nucleophile. Y110 contacts substrate.

The protein belongs to the tRNA pseudouridine synthase TruA family.

The catalysed reaction is uridine(38/39/40) in tRNA = pseudouridine(38/39/40) in tRNA. In terms of biological role, formation of pseudouridine at positions 38, 39 and 40 in the anticodon stem and loop of transfer RNAs. The polypeptide is tRNA pseudouridine synthase A (Methanocorpusculum labreanum (strain ATCC 43576 / DSM 4855 / Z)).